The primary structure comprises 394 residues: Exodeoxyribonuclease 7 large subunit (394 aa).

It belongs to the XseA family. In terms of assembly, heterooligomer composed of large and small subunits.

It is found in the cytoplasm. The catalysed reaction is Exonucleolytic cleavage in either 5'- to 3'- or 3'- to 5'-direction to yield nucleoside 5'-phosphates.. In terms of biological role, bidirectionally degrades single-stranded DNA into large acid-insoluble oligonucleotides, which are then degraded further into small acid-soluble oligonucleotides. This Thermotoga petrophila (strain ATCC BAA-488 / DSM 13995 / JCM 10881 / RKU-1) protein is Exodeoxyribonuclease 7 large subunit.